We begin with the raw amino-acid sequence, 255 residues long: Probable transcriptional regulatory protein Rcas_0718 (255 aa).

The protein belongs to the TACO1 family.

Its subcellular location is the cytoplasm. The chain is Probable transcriptional regulatory protein Rcas_0718 from Roseiflexus castenholzii (strain DSM 13941 / HLO8).